Reading from the N-terminus, the 578-residue chain is Arginine--tRNA ligase (578 aa).

The 'HIGH' region signature appears at 127-137 (PNLAKEMHVGH).

Belongs to the class-I aminoacyl-tRNA synthetase family. As to quaternary structure, monomer.

It localises to the cytoplasm. The enzyme catalyses tRNA(Arg) + L-arginine + ATP = L-arginyl-tRNA(Arg) + AMP + diphosphate. This Pseudomonas entomophila (strain L48) protein is Arginine--tRNA ligase.